Consider the following 166-residue polypeptide: Lipoprotein signal peptidase (166 aa).

4 helical membrane passes run 9–29, 45–65, 71–91, and 100–120; these read ASGA…FDQL, ALTS…FGFL, WQRW…CFLL, and FSVS…DRLV. Active-site residues include Asp126 and Asp144. Residues 135-155 form a helical membrane-spanning segment; it reads WHFPAFNLADSAITVGAVLLI.

This sequence belongs to the peptidase A8 family.

It localises to the cell inner membrane. The catalysed reaction is Release of signal peptides from bacterial membrane prolipoproteins. Hydrolyzes -Xaa-Yaa-Zaa-|-(S,diacylglyceryl)Cys-, in which Xaa is hydrophobic (preferably Leu), and Yaa (Ala or Ser) and Zaa (Gly or Ala) have small, neutral side chains.. It functions in the pathway protein modification; lipoprotein biosynthesis (signal peptide cleavage). Its function is as follows. This protein specifically catalyzes the removal of signal peptides from prolipoproteins. This chain is Lipoprotein signal peptidase, found in Burkholderia cenocepacia (strain HI2424).